We begin with the raw amino-acid sequence, 366 residues long: Peptide chain release factor 2 (366 aa).

An N5-methylglutamine modification is found at glutamine 251.

It belongs to the prokaryotic/mitochondrial release factor family. Methylated by PrmC. Methylation increases the termination efficiency of RF2.

It localises to the cytoplasm. Peptide chain release factor 2 directs the termination of translation in response to the peptide chain termination codons UGA and UAA. In Listeria monocytogenes serotype 4b (strain F2365), this protein is Peptide chain release factor 2 (prfB).